Here is a 126-residue protein sequence, read N- to C-terminus: Small ribosomal subunit protein bS6 (126 aa).

The segment at 104-126 is disordered; it reads QGAEKGKSSSKKVAAEAEASEEA.

The protein belongs to the bacterial ribosomal protein bS6 family.

Functionally, binds together with bS18 to 16S ribosomal RNA. In Coxiella burnetii (strain Dugway 5J108-111), this protein is Small ribosomal subunit protein bS6.